The primary structure comprises 436 residues: tRNA-2-methylthio-N(6)-dimethylallyladenosine synthase (436 aa).

Residues 5–120 (KKLFIQTLGC…IKDVVDVKGA (116 aa)) enclose the MTTase N-terminal domain. The [4Fe-4S] cluster site is built by Cys14, Cys51, Cys83, Cys152, Cys156, and Cys159. The region spanning 138-372 (KTNKYRASVN…IELHKRYLEE (235 aa)) is the Radical SAM core domain. Residues 375–436 (PKLIGETLNI…RTSLKGEVVN (62 aa)) form the TRAM domain.

This sequence belongs to the methylthiotransferase family. MiaB subfamily. In terms of assembly, monomer. The cofactor is [4Fe-4S] cluster.

Its subcellular location is the cytoplasm. It carries out the reaction N(6)-dimethylallyladenosine(37) in tRNA + (sulfur carrier)-SH + AH2 + 2 S-adenosyl-L-methionine = 2-methylsulfanyl-N(6)-dimethylallyladenosine(37) in tRNA + (sulfur carrier)-H + 5'-deoxyadenosine + L-methionine + A + S-adenosyl-L-homocysteine + 2 H(+). Its function is as follows. Catalyzes the methylthiolation of N6-(dimethylallyl)adenosine (i(6)A), leading to the formation of 2-methylthio-N6-(dimethylallyl)adenosine (ms(2)i(6)A) at position 37 in tRNAs that read codons beginning with uridine. The sequence is that of tRNA-2-methylthio-N(6)-dimethylallyladenosine synthase from Aliarcobacter butzleri (strain RM4018) (Arcobacter butzleri).